The sequence spans 174 residues: uncharacterized protein (174 aa).

Composition is skewed to basic and acidic residues over residues 1 to 31 (MDKHGVKTPLWKKETEELRAEDAEQEEGKEG) and 52 to 67 (EPPRVAEEGEGRERRS). The segment at 1 to 69 (MDKHGVKTPL…GEGRERRSVS (69 aa)) is disordered.

This is an uncharacterized protein from Homo sapiens (Human).